We begin with the raw amino-acid sequence, 346 residues long: Phosphate acyltransferase (346 aa).

It belongs to the PlsX family. As to quaternary structure, homodimer. Probably interacts with PlsY.

The protein localises to the cytoplasm. It catalyses the reaction a fatty acyl-[ACP] + phosphate = an acyl phosphate + holo-[ACP]. It functions in the pathway lipid metabolism; phospholipid metabolism. Its function is as follows. Catalyzes the reversible formation of acyl-phosphate (acyl-PO(4)) from acyl-[acyl-carrier-protein] (acyl-ACP). This enzyme utilizes acyl-ACP as fatty acyl donor, but not acyl-CoA. The polypeptide is Phosphate acyltransferase (Psychromonas ingrahamii (strain DSM 17664 / CCUG 51855 / 37)).